Consider the following 724-residue polypeptide: Membrane protein YdfJ (724 aa).

A run of 12 helical transmembrane segments spans residues 17 to 37 (IKAI…AVTL), 179 to 199 (IVGI…LLIA), 200 to 220 (GLPI…VLIG), 231 to 251 (LSLA…FIFT), 277 to 297 (AVVF…VVNI), 309 to 329 (LSVL…LSIA), 360 to 380 (IMLS…SMHL), 512 to 532 (AIPV…TIVF), 539 to 559 (LVAV…CVFV), 575 to 595 (GPIL…LAMD), 627 to 647 (PVVT…IFAG), and 655 to 675 (GLAL…TLIP).

This sequence belongs to the resistance-nodulation-cell division (RND) (TC 2.A.6) family. MmpL subfamily.

The protein resides in the cell membrane. The sequence is that of Membrane protein YdfJ (ydfJ) from Bacillus subtilis (strain 168).